Here is a 151-residue protein sequence, read N- to C-terminus: Ribosome maturation factor RimP (151 aa).

The protein belongs to the RimP family.

It localises to the cytoplasm. Required for maturation of 30S ribosomal subunits. This chain is Ribosome maturation factor RimP, found in Haemophilus influenzae (strain 86-028NP).